Reading from the N-terminus, the 767-residue chain is DNA topoisomerase 1 (767 aa).

The segment covering 1-23 (MSGDHLHNDSQIEADFRLNDSHK) has biased composition (basic and acidic residues). Residues 1–200 (MSGDHLHNDS…DNKKKKAKKE (200 aa)) are disordered. N-acetylserine is present on serine 2. A phosphoserine mark is found at serine 2 and serine 10. Residues 24–39 (HKDKHKDREHRHKEHK) show a composition bias toward basic residues. Over residues 40–110 (KDKDKDREKS…DAKIKKEKEN (71 aa)) the composition is skewed to basic and acidic residues. Serine 59 carries the post-translational modification Phosphoserine. Residue lysine 103 forms a Glycyl lysine isopeptide (Lys-Gly) (interchain with G-Cter in SUMO2) linkage. Lysine 105 is covalently cross-linked (Glycyl lysine isopeptide (Lys-Gly) (interchain with G-Cter in SUMO); alternate). Residue lysine 105 forms a Glycyl lysine isopeptide (Lys-Gly) (interchain with G-Cter in SUMO2); alternate linkage. Residue serine 114 is modified to Phosphoserine. Residue lysine 119 forms a Glycyl lysine isopeptide (Lys-Gly) (interchain with G-Cter in SUMO); alternate linkage. Lysine 119 participates in a covalent cross-link: Glycyl lysine isopeptide (Lys-Gly) (interchain with G-Cter in SUMO2); alternate. Residue lysine 119 forms a Glycyl lysine isopeptide (Lys-Gly) (interchain with G-Cter in SUMO1); alternate linkage. The segment covering 131 to 168 (PKEDIKPLKRPRDEDDADYKPKKIKTEDIKKEKKRKLE) has biased composition (basic and acidic residues). Glycyl lysine isopeptide (Lys-Gly) (interchain with G-Cter in SUMO2) cross-links involve residues lysine 136 and lysine 150. Residue lysine 155 forms a Glycyl lysine isopeptide (Lys-Gly) (interchain with G-Cter in SUMO); alternate linkage. A Glycyl lysine isopeptide (Lys-Gly) (interchain with G-Cter in SUMO2); alternate cross-link involves residue lysine 155. Residues lysine 160 and lysine 166 each participate in a glycyl lysine isopeptide (Lys-Gly) (interchain with G-Cter in SUMO2) cross-link. Lysine 174 participates in a covalent cross-link: Glycyl lysine isopeptide (Lys-Gly) (interchain with G-Cter in SUMO2); alternate. Lysine 174 carries the N6-acetyllysine; alternate modification. Positions 181–200 (KDKDKKVAEPDNKKKKAKKE) are enriched in basic and acidic residues. Residue lysine 206 forms a Glycyl lysine isopeptide (Lys-Gly) (interchain with G-Cter in SUMO2) linkage. Lysine 282 is modified (N6-acetyllysine). A Glycyl lysine isopeptide (Lys-Gly) (interchain with G-Cter in SUMO2) cross-link involves residue lysine 338. Interaction with DNA stretches follow at residues 427–428 (KY) and 490–495 (RAGNEK). The region spanning 434-767 (SSRIKGEKDW…IDMTDEDYEF (334 aa)) is the Topo IB-type catalytic domain. Serine 508 is subject to Phosphoserine; by CK2. A Glycyl lysine isopeptide (Lys-Gly) (interchain with G-Cter in SUMO2) cross-link involves residue lysine 551. The interaction with DNA stretch occupies residues 587–589 (TAK). Residues lysine 644, lysine 702, and lysine 714 each participate in a glycyl lysine isopeptide (Lys-Gly) (interchain with G-Cter in SUMO2) cross-link. Catalysis depends on tyrosine 725, which acts as the O-(3'-phospho-DNA)-tyrosine intermediate.

The protein belongs to the type IB topoisomerase family. In terms of assembly, monomer. Interacts with ERCC6. Interacts with TPRN; TPRN interacts with a number of DNA damage response proteins, is recruited to sites of DNA damage and may play a role in DNA damage repair. Sumoylated. Lys-119 is the main site of sumoylation. Sumoylation plays a role in partitioning TOP1 between nucleoli and nucleoplasm. Levels are dramatically increased on camptothecin (CPT) treatment. In terms of processing, phosphorylation at Ser-508 by CK2 increases binding to supercoiled DNA and sensitivity to camptothecin.

It localises to the nucleus. The protein resides in the nucleolus. The protein localises to the nucleoplasm. It carries out the reaction ATP-independent breakage of single-stranded DNA, followed by passage and rejoining.. Functionally, releases the supercoiling and torsional tension of DNA introduced during the DNA replication and transcription by transiently cleaving and rejoining one strand of the DNA duplex. Introduces a single-strand break via transesterification at a target site in duplex DNA. The scissile phosphodiester is attacked by the catalytic tyrosine of the enzyme, resulting in the formation of a DNA-(3'-phosphotyrosyl)-enzyme intermediate and the expulsion of a 5'-OH DNA strand. The free DNA strand then rotates around the intact phosphodiester bond on the opposing strand, thus removing DNA supercoils. Finally, in the religation step, the DNA 5'-OH attacks the covalent intermediate to expel the active-site tyrosine and restore the DNA phosphodiester backbone. Regulates the alternative splicing of tissue factor (F3) pre-mRNA in endothelial cells. Involved in the circadian transcription of the core circadian clock component BMAL1 by altering the chromatin structure around the ROR response elements (ROREs) on the BMAL1 promoter. In Rattus norvegicus (Rat), this protein is DNA topoisomerase 1 (Top1).